Consider the following 409-residue polypeptide: DNA replication and repair protein RecF (409 aa).

G30–T37 is an ATP binding site.

It belongs to the RecF family.

The protein localises to the cytoplasm. Functionally, the RecF protein is involved in DNA metabolism; it is required for DNA replication and normal SOS inducibility. RecF binds preferentially to single-stranded, linear DNA. It also seems to bind ATP. The chain is DNA replication and repair protein RecF from Rhodococcus erythropolis (strain PR4 / NBRC 100887).